A 311-amino-acid polypeptide reads, in one-letter code: DNA repair and recombination protein RadA (311 aa).

Position 104 to 111 (104 to 111 (GEFGSGKS)) interacts with ATP.

This sequence belongs to the eukaryotic RecA-like protein family.

In terms of biological role, involved in DNA repair and in homologous recombination. Binds and assemble on single-stranded DNA to form a nucleoprotein filament. Hydrolyzes ATP in a ssDNA-dependent manner and promotes DNA strand exchange between homologous DNA molecules. In Methanobrevibacter smithii (strain ATCC 35061 / DSM 861 / OCM 144 / PS), this protein is DNA repair and recombination protein RadA.